A 121-amino-acid chain; its full sequence is Small ribosomal subunit protein uS13 (121 aa).

The segment at 93-121 (RGLPVRGQNTKNNARTRKGPRRTVANKKK) is disordered. Residues 106–121 (ARTRKGPRRTVANKKK) show a composition bias toward basic residues.

It belongs to the universal ribosomal protein uS13 family. As to quaternary structure, part of the 30S ribosomal subunit. Forms a loose heterodimer with protein S19. Forms two bridges to the 50S subunit in the 70S ribosome.

Located at the top of the head of the 30S subunit, it contacts several helices of the 16S rRNA. In the 70S ribosome it contacts the 23S rRNA (bridge B1a) and protein L5 of the 50S subunit (bridge B1b), connecting the 2 subunits; these bridges are implicated in subunit movement. Contacts the tRNAs in the A and P-sites. The protein is Small ribosomal subunit protein uS13 of Bacillus licheniformis (strain ATCC 14580 / DSM 13 / JCM 2505 / CCUG 7422 / NBRC 12200 / NCIMB 9375 / NCTC 10341 / NRRL NRS-1264 / Gibson 46).